We begin with the raw amino-acid sequence, 662 residues long: Bifunctional polymyxin resistance protein ArnA (662 aa).

Residues 1–307 (MTSKAVVFAY…ELGLVEGARL (307 aa)) form a formyltransferase ArnAFT region. His106 acts as the Proton donor; for formyltransferase activity in catalysis. (6R)-10-formyltetrahydrofolate-binding positions include Arg116 and 138-142 (VERAD). Residues 316 to 662 (RRTRVLILGV…EALREREAQA (347 aa)) are dehydrogenase ArnADH. NAD(+) contacts are provided by residues Asp349 and 370-371 (DI). Residues Ala395, Tyr400, and 434–435 (TS) each bind UDP-alpha-D-glucuronate. Catalysis depends on Glu436, which acts as the Proton acceptor; for decarboxylase activity. UDP-alpha-D-glucuronate contacts are provided by residues Arg462, Asn493, 527-536 (RLVDGGAQKR), and Tyr614. Catalysis depends on Arg620, which acts as the Proton donor; for decarboxylase activity.

It in the N-terminal section; belongs to the Fmt family. UDP-L-Ara4N formyltransferase subfamily. This sequence in the C-terminal section; belongs to the NAD(P)-dependent epimerase/dehydratase family. UDP-glucuronic acid decarboxylase subfamily. Homohexamer, formed by a dimer of trimers.

It catalyses the reaction UDP-alpha-D-glucuronate + NAD(+) = UDP-beta-L-threo-pentopyranos-4-ulose + CO2 + NADH. The enzyme catalyses UDP-4-amino-4-deoxy-beta-L-arabinose + (6R)-10-formyltetrahydrofolate = UDP-4-deoxy-4-formamido-beta-L-arabinose + (6S)-5,6,7,8-tetrahydrofolate + H(+). It functions in the pathway nucleotide-sugar biosynthesis; UDP-4-deoxy-4-formamido-beta-L-arabinose biosynthesis; UDP-4-deoxy-4-formamido-beta-L-arabinose from UDP-alpha-D-glucuronate: step 1/3. Its pathway is nucleotide-sugar biosynthesis; UDP-4-deoxy-4-formamido-beta-L-arabinose biosynthesis; UDP-4-deoxy-4-formamido-beta-L-arabinose from UDP-alpha-D-glucuronate: step 3/3. The protein operates within bacterial outer membrane biogenesis; lipopolysaccharide biosynthesis. Its function is as follows. Bifunctional enzyme that catalyzes the oxidative decarboxylation of UDP-glucuronic acid (UDP-GlcUA) to UDP-4-keto-arabinose (UDP-Ara4O) and the addition of a formyl group to UDP-4-amino-4-deoxy-L-arabinose (UDP-L-Ara4N) to form UDP-L-4-formamido-arabinose (UDP-L-Ara4FN). The modified arabinose is attached to lipid A and is required for resistance to polymyxin and cationic antimicrobial peptides. This Pseudomonas paraeruginosa (strain DSM 24068 / PA7) (Pseudomonas aeruginosa (strain PA7)) protein is Bifunctional polymyxin resistance protein ArnA.